The sequence spans 569 residues: Glucose-6-phosphate isomerase, cytosolic 2 (569 aa).

Glu-360 serves as the catalytic Proton donor. Active-site residues include His-391 and Lys-516.

This sequence belongs to the GPI family. As to quaternary structure, homodimer.

The protein localises to the cytoplasm. The enzyme catalyses alpha-D-glucose 6-phosphate = beta-D-fructose 6-phosphate. It functions in the pathway carbohydrate degradation; glycolysis; D-glyceraldehyde 3-phosphate and glycerone phosphate from D-glucose: step 2/4. The chain is Glucose-6-phosphate isomerase, cytosolic 2 (PGIC2) from Clarkia concinna (Red ribbons).